The primary structure comprises 1623 residues: ATP-binding cassette sub-family A member 9 (1623 aa).

The chain crosses the membrane as a helical span at residues 31 to 51; that stretch reads LLEWLFSLLLILFVYQLSSNL. Asn120 is a glycosylation site (N-linked (GlcNAc...) asparagine). 6 consecutive transmembrane segments (helical) span residues 225 to 245, 265 to 285, 295 to 315, 329 to 349, 354 to 374, and 398 to 418; these read FFIF…SVNI, AFWL…AVLM, VVLT…LSLI, FLTG…GFTA, LPAF…TTGM, and LIMA…VLAL. The ABC transporter 1 domain occupies 481 to 716; the sequence is IRIKNLKKEY…WGIGYHLSLH (236 aa). 517–524 is a binding site for ATP; that stretch reads GHSGAGKT. Helical transmembrane passes span 863–883, 1025–1045, 1071–1091, 1107–1127, 1135–1155, 1163–1183, and 1199–1219; these read LMTV…EHLV, AFFW…GSIS, LVDI…DSVF, IPCS…ISFI, SGIW…ATDI, LLIC…LIFS, and QLVF…FFIL. The ABC transporter 2 domain maps to 1287 to 1520; the sequence is LRKEYIGRTK…FGKDYLLEMK (234 aa). 1325-1332 provides a ligand contact to ATP; sequence GHNGAGKS.

Belongs to the ABC transporter superfamily. ABCA family. In terms of tissue distribution, highly expressed in heart and to lower extent in kidney, brain and spleen. Weakly expressed in developing and adult brains. Weakly expressed in the cerebellar granular layer at P14 and P21.

The protein localises to the membrane. Its function is as follows. Transporter that may play a role in monocyte differentiation and lipid transport and homeostasis. The sequence is that of ATP-binding cassette sub-family A member 9 (Abca9) from Mus musculus (Mouse).